Consider the following 344-residue polypeptide: Phenylalanine--tRNA ligase alpha subunit (344 aa).

Glutamate 256 contacts Mg(2+).

It belongs to the class-II aminoacyl-tRNA synthetase family. Phe-tRNA synthetase alpha subunit type 1 subfamily. In terms of assembly, tetramer of two alpha and two beta subunits. Requires Mg(2+) as cofactor.

It localises to the cytoplasm. It catalyses the reaction tRNA(Phe) + L-phenylalanine + ATP = L-phenylalanyl-tRNA(Phe) + AMP + diphosphate + H(+). The polypeptide is Phenylalanine--tRNA ligase alpha subunit (pheS) (Bacillus subtilis (strain 168)).